A 309-amino-acid polypeptide reads, in one-letter code: Elongator complex protein 5 (309 aa).

Phosphoserine occurs at positions 3 and 4.

This sequence belongs to the ELP5 family. In terms of assembly, component of the elongator complex, which consists of ELP1/IKI3, ELP2, ELP3, ELP4, ELP5/IKI1 and ELP6. The elongator complex is composed of two copies of the Elp123 subcomplex (composed of ELP1/IKI3, ELP2 and ELP3) and two copies of the Elp456 subcomplex (composed of ELP4, ELP5/IKI1 and ELP6). The Elp123 subcomplex forms a two-lobed scaffold, which binds the Elp456 subcomplex asymmetrically. In each lobe, ELP2 is tightly sandwiched between ELP1/IKI3 and ELP3. The Elp123 subcomplex binds tRNA through ELP1/IKI3 and ELP3 and can bind 2 tRNAs simultaneously. tRNA-binding by the Elp123 subcomplex induces conformational rearrangements which precisely position the targeted anticodon base in the active site. The Elp456 subcomplex binds tRNA and has ATPase activity. Interacts with KTI11/DPH3.

Its subcellular location is the cytoplasm. It localises to the nucleus. Its pathway is tRNA modification; 5-methoxycarbonylmethyl-2-thiouridine-tRNA biosynthesis. Component of the elongator complex which is required for multiple tRNA modifications, including mcm5U (5-methoxycarbonylmethyl uridine), mcm5s2U (5-methoxycarbonylmethyl-2-thiouridine), and ncm5U (5-carbamoylmethyl uridine). The elongator complex catalyzes formation of carboxymethyluridine in the wobble base at position 34 in tRNAs. It functions as a gamma-toxin target (TOT); disruption of the complex confers resistance to Kluyveromyces lactis toxin zymocin (pGKL1 killer toxin). May also be involved in sensitivity to Pichia inositovora toxin. The sequence is that of Elongator complex protein 5 (IKI1) from Saccharomyces cerevisiae (strain ATCC 204508 / S288c) (Baker's yeast).